The primary structure comprises 317 residues: MASPAFAVNGMFTPVKLSGSFTASMPVDSKPAASATGVRMVVDPLQRKYQSIGKIGVDYSRPKKLATYVRSGYSVGMEFPNTPSMAGHYSLTDCDKAGGAAKILMKYDEYCAKGMLQVGKRAACRTGVYTTKCTEGTQPQMAFDVRVFNRTQAFRQAQKPVAARLREQYEARKACFVLAHNCSREEAQFKEMPMSCATFLASKMEATGACYRTVRPTSVAEDYMAGSVRAQLYTKLNPKGVYGVGACEDGHAKGDADQRRVIALASEYRAAAQSPSTVTGQQYKSAQLATQLFAHDCHHEQEQIYEYPAVAAAMCRY.

The N-terminal 40 residues, 1 to 40 (MASPAFAVNGMFTPVKLSGSFTASMPVDSKPAASATGVRM), are a transit peptide targeting the chloroplast. Residues C94 and C133 each coordinate phycourobilin. C210 provides a ligand contact to (2R,3E)-phycoerythrobilin. Position 297 (C297) interacts with phycourobilin.

In terms of assembly, heteromer of 1 alpha, 1 beta and 2 gamma chains. Contains four covalently linked bilin chromophores.

The protein localises to the plastid. It localises to the chloroplast thylakoid membrane. Its function is as follows. Critical for the incorporation of phycoerythrin in the phycobilisome complex. The chain is R-phycoerythrin gamma chain, chloroplastic from Aglaothamnion neglectum (Red alga).